The following is a 130-amino-acid chain: MAENQNYGTGRRKSSSARVFIKPGSGKITINQRDLDVYFGRETARMIVRQPLELVEMTEKLDLYVTVKGGGISGQAGAIRHGITRALIEYDESLRSVLRAAGFVTRDARQVERKKVGLRKARRRPQFSKR.

It belongs to the universal ribosomal protein uS9 family.

The sequence is that of Small ribosomal subunit protein uS9 from Pasteurella multocida (strain Pm70).